An 810-amino-acid polypeptide reads, in one-letter code: MIPVTELRYFADTQPAYRILKPWWDVFTDYISIVMLMIAVFGGTLQVTQDKMICLPCKWVTKDSCNDSFRGWGASSPEPTYPNSTVLPTPDTGPTGIKYDLDRHQYNYVDAVCYENRLHWFAKYFPYLVLLHTLIFLACSNFWFKFPRTSSKLEHFVSILLKCFDSPWTTRALSETVVEESDPKPAFSKMNGSMDKKSSTVSEDVEATVPMLQRTKSRIEQGIVDRSETGVLDKKEGEQAKALFEKVKKFRTHVEEGDIVYRLYMRQTIIKVIKFFLIICYTVYYVHNIKFDVDCTVDIESLTGYRTYRCAHPLATLFKILASFYISLVIFYGLICMYTLWWMLRRSLKKYSFESIREESSYSDIPDVKNDFAFMLHLIDQYDPLYSKRFAVFLSEVSENKLRQLNLNNEWTLDKLRQRLTKNAQDKLELHLFMLSGIPDTVFDLLELEVLKLELIPDVTIPPSIAQLTGLKELWLYHTAAKIEAPALAFLRENLRALHIKFTDIKEIPLWIYSLKTLEELHLTGNLSAENNRYIVIDGLRELKRLKVLRLKSNLSKLPQVVTDVGVHLQKLSINNEGTKLIVLNSLKKMVNLTELELIRCDLERIPHSIFSLHNLQEIDLKDNNLKTIEEIISFQHLHRLTCLKLWYNHIAYIPIQIGNLTNLERLYLNRNKIEKIPTQLFYCRKLRYLDLSHNNLTLLPADIGLLQNLQNLAVTANRIEALPPELFQCRKLRALHLGNNVLQSLPSRVGELTNLTQIELRGNRLECLPVELGECPLLKRSGLVVEEDLFSTLPPEVKERLWRADKEQA.

Met1 is modified (N-acetylmethionine). Residues Met1–Pro22 are Cytoplasmic-facing. Residues Trp23–Val47 form a helical membrane-spanning segment. The Extracellular portion of the chain corresponds to Thr48–Lys123. Intrachain disulfides connect Cys54–Cys310, Cys57–Cys65, and Cys113–Cys295. Asn66 and Asn83 each carry an N-linked (GlcNAc...) asparagine glycan. The helical transmembrane segment at Tyr124–Phe142 threads the bilayer. Residues Trp143–Tyr264 lie on the Cytoplasmic side of the membrane. A Phosphothreonine modification is found at Thr200. Ser202 is subject to Phosphoserine. Thr215 bears the Phosphothreonine mark. Phosphoserine is present on Ser217. A helical transmembrane segment spans residues Met265–Val286. Residues His287–Thr316 lie on the Extracellular side of the membrane. Residues Leu317–Trp341 form a helical membrane-spanning segment. The Cytoplasmic portion of the chain corresponds to Trp342–Ala810. LRR repeat units follow at residues Glu399 to Lys422, Asn423 to Leu445, Glu447 to Leu468, Thr469 to Arg492, Glu493 to Leu515, Leu518 to Glu542, Leu543 to Val565, Val567 to Lys589, Met590 to Leu613, His614 to His637, His639 to Leu661, Thr662 to Cys684, Lys686 to Leu707, Gln708 to Cys730, Lys732 to Leu753, Thr754 to Cys776, and Leu778 to Arg801. The Di-leucine motif signature appears at Leu706–Leu707.

Belongs to the LRRC8 family. In terms of assembly, heterohexamer; oligomerizes with other LRRC8 proteins (LRRC8B, LRRC8C, LRRC8D and/or LRRC8E) to form a heterohexamer. Can form homohexamers in vitro, but these have lower conductance than heterohexamers. Detected in a channel complex that contains LRRC8A, LRRC8C and LRRC8E. In vivo, the subunit composition may depend primarily on expression levels, and heterooligomeric channels containing various proportions of the different LRRC8 proteins may coexist. Interact with GRB2. Interacts with NOX4; this interaction prevents the ubiquitin-mediated degradation of LRRC8A. N-glycosylated.

The protein localises to the cell membrane. It is found in the lysosome membrane. It catalyses the reaction chloride(in) = chloride(out). The catalysed reaction is iodide(out) = iodide(in). The enzyme catalyses taurine(out) = taurine(in). It carries out the reaction L-aspartate(out) = L-aspartate(in). It catalyses the reaction L-glutamate(out) = L-glutamate(in). The catalysed reaction is myo-inositol(out) = myo-inositol(in). The enzyme catalyses 2',3'-cGAMP(out) = 2',3'-cGAMP(in). Its activity is regulated as follows. Inhibited by (4-[(2-butyl-6,7-dichloro-2-cyclopentyl-2,3-dihydro-1-oxo-1H-inden-5-yl)oxy]butanoic acid), which plugs the channel like a cork in a bottle by binding in the extracellular selectivity filter and sterically occluding ion conduction. Lipids may block conduction in closed heterohexameric channels. Functionally, essential component of the volume-regulated anion channel (VRAC, also named VSOAC channel), an anion channel required to maintain a constant cell volume in response to extracellular or intracellular osmotic changes. The VRAC channel conducts iodide better than chloride and can also conduct organic osmolytes like taurine. Mediates efflux of amino acids, such as aspartate and glutamate, in response to osmotic stress. In complex with LRRC8C or LRRC8E, acts as a transporter of immunoreactive cyclic dinucleotide GMP-AMP (2'-3'-cGAMP), an immune messenger produced in response to DNA virus in the cytosol: mediates both import and export of 2'-3'-cGAMP, thereby promoting transfer of 2'-3'-cGAMP to bystander cells. In contrast, complexes containing LRRC8D inhibit transport of 2'-3'-cGAMP. Required for in vivo channel activity, together with at least one other family member (LRRC8B, LRRC8C, LRRC8D or LRRC8E); channel characteristics depend on the precise subunit composition. Can form functional channels by itself (in vitro). Involved in B-cell development: required for the pro-B cell to pre-B cell transition. Also required for T-cell development. Required for myoblast differentiation: VRAC activity promotes membrane hyperpolarization and regulates insulin-stimulated glucose metabolism and oxygen consumption. Also acts as a regulator of glucose-sensing in pancreatic beta cells: VRAC currents, generated in response to hypotonicity- or glucose-induced beta cell swelling, depolarize cells, thereby causing electrical excitation, leading to increase glucose sensitivity and insulin secretion. Also plays a role in lysosome homeostasis by forming functional lysosomal VRAC channels in response to low cytoplasmic ionic strength condition: lysosomal VRAC channels are necessary for the formation of large lysosome-derived vacuoles, which store and then expel excess water to maintain cytosolic water homeostasis. Acts as a key factor in NLRP3 inflammasome activation by modulating itaconate efflux and mitochondria function. This Rattus norvegicus (Rat) protein is Volume-regulated anion channel subunit LRRC8A.